We begin with the raw amino-acid sequence, 217 residues long: Probable nicotinate-nucleotide adenylyltransferase (217 aa).

The protein belongs to the NadD family.

It carries out the reaction nicotinate beta-D-ribonucleotide + ATP + H(+) = deamido-NAD(+) + diphosphate. The protein operates within cofactor biosynthesis; NAD(+) biosynthesis; deamido-NAD(+) from nicotinate D-ribonucleotide: step 1/1. Catalyzes the reversible adenylation of nicotinate mononucleotide (NaMN) to nicotinic acid adenine dinucleotide (NaAD). This chain is Probable nicotinate-nucleotide adenylyltransferase, found in Dechloromonas aromatica (strain RCB).